The chain runs to 336 residues: IgLON family member 5 (336 aa).

An N-terminal signal peptide occupies residues 1–30; it reads MPPPAPGARLRLLAAAALAGLAVISRGLLS. Ig-like C2-type domains lie at 33–122, 132–217, and 218–307; these read LEFN…QPYT, PARI…VNYP, and PTIT…MRLL. Asparagine 41, asparagine 49, asparagine 67, and asparagine 137 each carry an N-linked (GlcNAc...) asparagine glycan. Cysteines 54 and 112 form a disulfide. Disulfide bonds link cysteine 154–cysteine 195 and cysteine 238–cysteine 291. An N-linked (GlcNAc...) asparagine glycan is attached at asparagine 288.

Belongs to the immunoglobulin superfamily. IgLON family.

The protein resides in the secreted. This Homo sapiens (Human) protein is IgLON family member 5 (IGLON5).